The following is a 376-amino-acid chain: Glutamate 5-kinase (376 aa).

ATP is bound at residue K15. Substrate-binding residues include S55, D141, and N153. ATP-binding positions include 173 to 174 (SD) and 215 to 221 (TGGMQTK). The 82-residue stretch at 280–361 (AGRLTVDAGA…HAIAEVLDEA (82 aa)) folds into the PUA domain.

Belongs to the glutamate 5-kinase family.

It is found in the cytoplasm. It carries out the reaction L-glutamate + ATP = L-glutamyl 5-phosphate + ADP. It functions in the pathway amino-acid biosynthesis; L-proline biosynthesis; L-glutamate 5-semialdehyde from L-glutamate: step 1/2. In terms of biological role, catalyzes the transfer of a phosphate group to glutamate to form L-glutamate 5-phosphate. This chain is Glutamate 5-kinase, found in Salinibacter ruber (strain DSM 13855 / M31).